The primary structure comprises 354 residues: Guanine nucleotide-binding protein G(i) subunit alpha-3 (354 aa).

Gly2 carries N-myristoyl glycine lipidation. Cys3 carries S-palmitoyl cysteine lipidation. The region spanning 32–354 (KEVKLLLLGA…KNNLKECGLY (323 aa)) is the G-alpha domain. Residues 35-48 (KLLLLGAGESGKST) form a G1 motif region. GTP contacts are provided by Gly42, Glu43, Ser44, Gly45, Lys46, Ser47, Thr48, Asp150, Ser151, Leu175, Arg176, Thr177, Arg178, Val179, Lys180, Thr181, Val201, Gly203, Asn269, Lys270, Asp272, Leu273, Cys325, Ala326, and Thr327. Ser47 is a binding site for Mg(2+). Residues 173–181 (DVLRTRVKT) are G2 motif. Thr181 contacts Mg(2+). Residues 196–205 (FKMFDVGGQR) are G3 motif. The tract at residues 265–272 (ILFLNKKD) is G4 motif. A G5 motif region spans residues 324 to 329 (TCATDT).

The protein belongs to the G-alpha family. G(i/o/t/z) subfamily. As to quaternary structure, heterotrimeric G proteins are composed of 3 units; alpha, beta and gamma. The alpha subunit contains the guanine nucleotide binding site. GTP binding causes dissociation of the heterotrimer, liberating the individual subunits so that they can interact with downstream effector proteins. Forms a complex with CCDC88A/GIV and EGFR which leads to enhanced EGFR signaling and triggering of cell migration; ligand stimulation is required for recruitment of GNAI3 to the complex. Interacts (inactive GDP-bound form) with CCDC88A/GIV (via GBA motif); the interaction leads to activation of GNAI3. Interacts (inactive GDP-bound form) with CCDC88C/DAPLE (via GBA motif); the interaction leads to activation of GNAI3. Interacts (inactive GDP-bound form) with NUCB1 (via GBA motif) and NUCB2 (via GBA motif); the interaction leads to activation of GNAI3. Interacts (inactive GDP-bound form) with PLCD4 (via GBA motif); the interaction leads to activation of GNAI3. Interacts with INSR; the interaction is probably mediated by CCDC88A/GIV. Interacts with GPSM1. Interacts (GDP-bound form) with GPSM2 (via GoLoco domains). Does not interact with RGS2. Interacts with RGS8 and RGS10; this strongly enhances the intrinsic GTPase activity. Interacts with RGS16; this strongly enhances the intrinsic GTPase activity. Interacts with RGS12. Interacts (via active GTP- or inactive GDP-bound form) with RGS14. Interacts (via active GTP-bound form) with TRPC5 (via ANK repeats) in a homotetrameric ion channel; the interaction is direct and activates the channel activity.

The protein localises to the cytoplasm. Its subcellular location is the cell membrane. It is found in the cytoskeleton. It localises to the microtubule organizing center. The protein resides in the centrosome. Functionally, heterotrimeric guanine nucleotide-binding proteins (G proteins) function as transducers downstream of G protein-coupled receptors (GPCRs) in numerous signaling cascades. The alpha chain contains the guanine nucleotide binding site and alternates between an active, GTP-bound state and an inactive, GDP-bound state. Signaling by an activated GPCR promotes GDP release and GTP binding. The alpha subunit has a low GTPase activity that converts bound GTP to GDP, thereby terminating the signal. Both GDP release and GTP hydrolysis are modulated by numerous regulatory proteins. Signaling is mediated via effector proteins, such as adenylate cyclase. Inhibits adenylate cyclase activity, leading to decreased intracellular cAMP levels. Stimulates the activity of receptor-regulated K(+) channels. The active GTP-bound form prevents the association of RGS14 with centrosomes and is required for the translocation of RGS14 from the cytoplasm to the plasma membrane. May play a role in cell division. The active GTP-bound form activates the calcium permeant TRPC5 ion channels. The protein is Guanine nucleotide-binding protein G(i) subunit alpha-3 (Gnai3) of Mus musculus (Mouse).